Consider the following 312-residue polypeptide: MEKHQYRDLQLIGQGSFGSVFRAQDVESSKIVALKVVDLDATKDQIETLTQEINFLIDLNSVHITKYYASFVDGFRLWITMEYCDGGSCLDLLKLSGTFSERVIAEVMRQVLEALVYLHGQGKMHRDIKAANILTMKDGLVKLADFGVSGQLESLRDKNDDFVGTPFWMAPEVVKQTGYNYKADIWSLGITAYELATGEPPYSGIHPMKVLLLIPKHSPPSLERSKFSRAFCDFVSNCLKKNPKDRATAEYLSKHKFIKKYCPNTSVKEVVASYAKWKESELLPEATPYNSTMGNSANTIDEVVWDFGTVRR.

In terms of domain architecture, Protein kinase spans 6-258 (YRDLQLIGQG…AEYLSKHKFI (253 aa)). ATP contacts are provided by residues 12–20 (IGQGSFGSV) and Lys35. Asp127 (proton acceptor) is an active-site residue.

Belongs to the protein kinase superfamily. Ser/Thr protein kinase family.

Its subcellular location is the cytoplasm. It is found in the nucleus. The enzyme catalyses L-seryl-[protein] + ATP = O-phospho-L-seryl-[protein] + ADP + H(+). It carries out the reaction L-threonyl-[protein] + ATP = O-phospho-L-threonyl-[protein] + ADP + H(+). This Schizosaccharomyces pombe (strain 972 / ATCC 24843) (Fission yeast) protein is Serine/threonine-protein kinase ppk11 (ppk11).